A 226-amino-acid chain; its full sequence is ATP synthase F(0) complex subunit a (226 aa).

6 helical membrane passes run Phe6–Phe26, Trp68–Leu88, Gln97–Phe117, Ile138–Val158, Ile164–Ile184, and Ala189–Ile209.

It belongs to the ATPase A chain family. As to quaternary structure, component of the ATP synthase complex composed at least of ATP5F1A/subunit alpha, ATP5F1B/subunit beta, ATP5MC1/subunit c (homooctomer), MT-ATP6/subunit a, MT-ATP8/subunit 8, ATP5ME/subunit e, ATP5MF/subunit f, ATP5MG/subunit g, ATP5MK/subunit k, ATP5MJ/subunit j, ATP5F1C/subunit gamma, ATP5F1D/subunit delta, ATP5F1E/subunit epsilon, ATP5PF/subunit F6, ATP5PB/subunit b, ATP5PD/subunit d, ATP5PO/subunit OSCP. ATP synthase complex consists of a soluble F(1) head domain (subunits alpha(3) and beta(3)) - the catalytic core - and a membrane F(0) domain - the membrane proton channel (subunits c, a, 8, e, f, g, k and j). These two domains are linked by a central stalk (subunits gamma, delta, and epsilon) rotating inside the F1 region and a stationary peripheral stalk (subunits F6, b, d, and OSCP). Interacts with DNAJC30; interaction is direct.

It localises to the mitochondrion inner membrane. The catalysed reaction is H(+)(in) = H(+)(out). Subunit a, of the mitochondrial membrane ATP synthase complex (F(1)F(0) ATP synthase or Complex V) that produces ATP from ADP in the presence of a proton gradient across the membrane which is generated by electron transport complexes of the respiratory chain. ATP synthase complex consist of a soluble F(1) head domain - the catalytic core - and a membrane F(1) domain - the membrane proton channel. These two domains are linked by a central stalk rotating inside the F(1) region and a stationary peripheral stalk. During catalysis, ATP synthesis in the catalytic domain of F(1) is coupled via a rotary mechanism of the central stalk subunits to proton translocation. With the subunit c (ATP5MC1), forms the proton-conducting channel in the F(0) domain, that contains two crucial half-channels (inlet and outlet) that facilitate proton movement from the mitochondrial intermembrane space (IMS) into the matrix. Protons are taken up via the inlet half-channel and released through the outlet half-channel, following a Grotthuss mechanism. In Pan troglodytes (Chimpanzee), this protein is ATP synthase F(0) complex subunit a.